The primary structure comprises 444 residues: Glutamate--methylamine ligase (444 aa).

Residues 14–97 (HHVKYVLAQF…LVCDGHVNGK (84 aa)) form the GS beta-grasp domain. One can recognise a GS catalytic domain in the interval 103-444 (TRVVLKQQIA…WEINRYVQFY (342 aa)).

It belongs to the glutamine synthetase family. Type 3 subfamily. Mg(2+) serves as cofactor.

It catalyses the reaction methylamine + L-glutamate + ATP = N(5)-methyl-L-glutamine + ADP + phosphate + H(+). It carries out the reaction ethylamine + L-glutamate + ATP = N(5)-ethyl-L-glutamine + ADP + phosphate + H(+). Its activity is regulated as follows. Formation of theanine is repressed by a high concentration of glutamic acid. In terms of biological role, catalyzes the formation of N(5)-methyl-L-glutamine from glutamate and methylamine. In vitro, can also use ethylamine, hydroxylamine and ammonia, with 75%, 40% and 1% activity compared to methylamine, respectively. This is Glutamate--methylamine ligase from Methylovorus mays.